An 84-amino-acid chain; its full sequence is Large ribosomal subunit protein eL34 (84 aa).

It belongs to the eukaryotic ribosomal protein eL34 family.

This Pyrobaculum calidifontis (strain DSM 21063 / JCM 11548 / VA1) protein is Large ribosomal subunit protein eL34.